A 460-amino-acid polypeptide reads, in one-letter code: MGKEKGHINVVVIGHVDSGKSTTTGHLIYKCGGIDKRTIEKFEKEATELGKGSFKYAWVLDKLKAERERGITIDIALWKFETPKYNVTVIDAPGHRDFIKNMITGTSQADCAILIIGGGTGEFEAGISKDGQTREHALLAYTLGVKQLIVAVNKMDTTGWSQARFEEIVKETSNFIKKVGFNPKTVPFVPVSGFQGDNMIEPTTNMPWYQGWQKETKAGVVKGKTLLEAIDSIEPPARPTDKPLRLPLQDVYKIGGIGTVPVGRVETGVIKPGMIVTFAPAGVTTEVKSVEMHHESLDAGLPGDNVGFNVKNVSVKDIRRGNVCGDSKNDPPMGCASFTAQVIILNHPGQISAGYSPVLDCHTAHIACKFAELIEKIDRRSGKKIEESPKFVKSGDACIAKMVPSKPMCVEAFTDYAPLGRFAVRDMRQTVAVGVIKAVEKVAPGAAKVTKAAVKAGAKK.

Gly2 carries the n,N,N-trimethylglycine modification. Lys3 carries the post-translational modification N6,N6-dimethyllysine; alternate. The residue at position 3 (Lys3) is an N6-methyllysine; alternate. Residues 5–240 (KGHINVVVIG…DSIEPPARPT (236 aa)) enclose the tr-type G domain. Positions 14–21 (GHVDSGKS) are G1. Position 14–21 (14–21 (GHVDSGKS)) interacts with GTP. Lys30 bears the N6-methyllysine mark. Positions 70–74 (GITID) are G2. Lys79 bears the N6,N6,N6-trimethyllysine mark. The segment at 91–94 (DAPG) is G3. GTP is bound by residues 91 to 95 (DAPGH) and 153 to 156 (NKMD). The interval 153–156 (NKMD) is G4. The interval 192 to 194 (SGF) is G5. Lys316 carries the N6,N6-dimethyllysine; alternate modification. Residue Lys316 is modified to N6-methyllysine; alternate. N6-methyllysine is present on Lys390.

Belongs to the TRAFAC class translation factor GTPase superfamily. Classic translation factor GTPase family. EF-Tu/EF-1A subfamily.

Its subcellular location is the cytoplasm. In terms of biological role, this protein promotes the GTP-dependent binding of aminoacyl-tRNA to the A-site of ribosomes during protein biosynthesis. In Schizosaccharomyces pombe (strain 972 / ATCC 24843) (Fission yeast), this protein is Elongation factor 1-alpha-B (tef102).